Consider the following 1165-residue polypeptide: Integrin alpha-L (1165 aa).

The first 23 residues, 1 to 23, serve as a signal peptide directing secretion; that stretch reads MNSCIIVLRLLLSGPFVFAPAWS. Over 24 to 1084 the chain is Extracellular; it reads YNLDVRHVQN…MKVDLVYEKE (1061 aa). FG-GAP repeat units follow at residues 29 to 80 and 81 to 138; these read RHVQ…DCLP and VTLS…GPVL. N-linked (GlcNAc...) asparagine glycosylation is present at asparagine 33. Cysteine 71 and cysteine 78 are oxidised to a cystine. A glycan (N-linked (GlcNAc...) asparagine) is linked at asparagine 86. Cysteine 108 and cysteine 126 form a disulfide bridge. In terms of domain architecture, VWFA spans 153 to 324; the sequence is DLVFLFDGSM…EKLKDLFTEL (172 aa). The N-linked (GlcNAc...) asparagine glycan is linked to asparagine 185. 5 FG-GAP repeats span residues 335–386, 387–442, 443–503, 504–560, and 564–624; these read SKQD…SSTF, VGNE…GGPW, SQIQ…EFQM, VSEL…GLSP, and QRIE…FSPA. Ca(2+) is bound by residues aspartate 465, aspartate 467, aspartate 469, glutamate 473, aspartate 527, asparagine 529, aspartate 531, aspartate 535, aspartate 587, aspartate 591, and aspartate 595. Residues asparagine 646, asparagine 667, and asparagine 723 are each glycosylated (N-linked (GlcNAc...) asparagine). Cysteines 650 and 704 form a disulfide. 2 disulfides stabilise this stretch: cysteine 768–cysteine 774 and cysteine 842–cysteine 858. N-linked (GlcNAc...) asparagine glycosylation is found at asparagine 859, asparagine 894, and asparagine 929. Disulfide bonds link cysteine 994-cysteine 1009 and cysteine 1017-cysteine 1048. Asparagine 1056 and asparagine 1067 each carry an N-linked (GlcNAc...) asparagine glycan. The chain crosses the membrane as a helical span at residues 1085-1105; it reads MLYLYVLSGIGGLLLLFLIFI. Topologically, residues 1106 to 1165 are cytoplasmic; the sequence is ALYKVGFFKRNLKEKMEANVDASSEIPGEDAGQPELEKECKDPGCLEPLQKTDEDGSGGD. Residues 1111 to 1115 carry the GFFKR motif motif; sequence GFFKR. The disordered stretch occupies residues 1123-1165; sequence ANVDASSEIPGEDAGQPELEKECKDPGCLEPLQKTDEDGSGGD. Residues 1140 to 1159 are compositionally biased toward basic and acidic residues; that stretch reads ELEKECKDPGCLEPLQKTDE.

The protein belongs to the integrin alpha chain family. Heterodimer of an alpha and a beta subunit. The ITGAL alpha subunit associates with the ITGB2 beta subunit. Interacts with THBD. Interacts with CD226. In resting T-cells, up to 40% of surface ITGAL is constitutively phosphorylated. Phosphorylation causes conformational changes needed for ligand binding and is necessary for the activation by some physiological agents.

The protein resides in the cell membrane. Functionally, integrin ITGAL/ITGB2 is a receptor for ICAM1, ICAM2, ICAM3 and ICAM4. Integrin ITGAL/ITGB2 is a receptor for F11R. Integrin ITGAL/ITGB2 is a receptor for the secreted form of ubiquitin-like protein ISG15; the interaction is mediated by ITGAL. Involved in a variety of immune phenomena including leukocyte-endothelial cell interaction, cytotoxic T-cell mediated killing, and antibody dependent killing by granulocytes and monocytes. Contributes to natural killer cell cytotoxicity. Involved in leukocyte adhesion and transmigration of leukocytes including T-cells and neutrophils. Acts as a platform at the immunological synapse to translate TCR engagement and density of the ITGAL ligand ICAM1 into graded adhesion. Required for generation of common lymphoid progenitor cells in bone marrow, indicating the role in lymphopoiesis. Integrin ITGAL/ITGB2 in association with ICAM3, contributes to apoptotic neutrophil phagocytosis by macrophages. The polypeptide is Integrin alpha-L (Bos taurus (Bovine)).